Here is a 426-residue protein sequence, read N- to C-terminus: Glutamate-1-semialdehyde 2,1-aminomutase (426 aa).

Residue K263 is modified to N6-(pyridoxal phosphate)lysine.

The protein belongs to the class-III pyridoxal-phosphate-dependent aminotransferase family. HemL subfamily. Homodimer. Requires pyridoxal 5'-phosphate as cofactor.

The protein localises to the cytoplasm. The catalysed reaction is (S)-4-amino-5-oxopentanoate = 5-aminolevulinate. It participates in porphyrin-containing compound metabolism; protoporphyrin-IX biosynthesis; 5-aminolevulinate from L-glutamyl-tRNA(Glu): step 2/2. The protein is Glutamate-1-semialdehyde 2,1-aminomutase of Dichelobacter nodosus (strain VCS1703A).